We begin with the raw amino-acid sequence, 550 residues long: Arginine--tRNA ligase (550 aa).

Positions 130–140 (ANPTGPIHIGG) match the 'HIGH' region motif.

The protein belongs to the class-I aminoacyl-tRNA synthetase family. As to quaternary structure, monomer.

It localises to the cytoplasm. The catalysed reaction is tRNA(Arg) + L-arginine + ATP = L-arginyl-tRNA(Arg) + AMP + diphosphate. The protein is Arginine--tRNA ligase of Mycobacterium marinum (strain ATCC BAA-535 / M).